The primary structure comprises 276 residues: Formamidopyrimidine-DNA glycosylase (276 aa).

Pro-2 (schiff-base intermediate with DNA) is an active-site residue. The Proton donor role is filled by Glu-3. Lys-60 (proton donor; for beta-elimination activity) is an active-site residue. DNA contacts are provided by His-93 and Arg-112. The FPG-type zinc-finger motif lies at 240 to 274; it reads HVYGRKQQPCHHCDTAIEKTVVGGRGTHYCPNCQP. Arg-264 (proton donor; for delta-elimination activity) is an active-site residue.

It belongs to the FPG family. In terms of assembly, monomer. The cofactor is Zn(2+).

It carries out the reaction Hydrolysis of DNA containing ring-opened 7-methylguanine residues, releasing 2,6-diamino-4-hydroxy-5-(N-methyl)formamidopyrimidine.. The catalysed reaction is 2'-deoxyribonucleotide-(2'-deoxyribose 5'-phosphate)-2'-deoxyribonucleotide-DNA = a 3'-end 2'-deoxyribonucleotide-(2,3-dehydro-2,3-deoxyribose 5'-phosphate)-DNA + a 5'-end 5'-phospho-2'-deoxyribonucleoside-DNA + H(+). Its function is as follows. Involved in base excision repair of DNA damaged by oxidation or by mutagenic agents. Acts as a DNA glycosylase that recognizes and removes damaged bases. Has a preference for oxidized purines, such as 7,8-dihydro-8-oxoguanine (8-oxoG). Has AP (apurinic/apyrimidinic) lyase activity and introduces nicks in the DNA strand. Cleaves the DNA backbone by beta-delta elimination to generate a single-strand break at the site of the removed base with both 3'- and 5'-phosphates. In Shouchella clausii (strain KSM-K16) (Alkalihalobacillus clausii), this protein is Formamidopyrimidine-DNA glycosylase.